The primary structure comprises 607 residues: Elongation factor 4 (607 aa).

The tr-type G domain occupies 11 to 193 (ENIRNFSIIA…KIVEVVPAPD (183 aa)). Residues 23 to 28 (DHGKST) and 140 to 143 (NKID) contribute to the GTP site.

This sequence belongs to the TRAFAC class translation factor GTPase superfamily. Classic translation factor GTPase family. LepA subfamily.

It localises to the cell membrane. The catalysed reaction is GTP + H2O = GDP + phosphate + H(+). Its function is as follows. Required for accurate and efficient protein synthesis under certain stress conditions. May act as a fidelity factor of the translation reaction, by catalyzing a one-codon backward translocation of tRNAs on improperly translocated ribosomes. Back-translocation proceeds from a post-translocation (POST) complex to a pre-translocation (PRE) complex, thus giving elongation factor G a second chance to translocate the tRNAs correctly. Binds to ribosomes in a GTP-dependent manner. In Staphylococcus aureus (strain USA300), this protein is Elongation factor 4.